Reading from the N-terminus, the 182-residue chain is Spermatophorin SP23 (182 aa).

Positions 1–7 (MVASIAG) are cleaved as a signal peptide. 3 disordered regions span residues 1 to 26 (MVAS…FQPY), 56 to 79 (FQTI…NSIE), and 104 to 136 (IVVN…PPTI). Residues 109–128 (APPPPPVIYQAPPPPPPPPI) show a composition bias toward pro residues.

In terms of tissue distribution, spermatophore.

Its subcellular location is the secreted. In terms of biological role, structural protein of a layer within the wall of the spermatophore produced probably by cell type 4 of the bean-shaped gland (BAG). Fixation in the spermatophore seems to require covalent cross-linking of spermatophorins. The sequence is that of Spermatophorin SP23 (SP23) from Tenebrio molitor (Yellow mealworm beetle).